The chain runs to 418 residues: Gamma-glutamyl phosphate reductase (418 aa).

It belongs to the gamma-glutamyl phosphate reductase family.

The protein resides in the cytoplasm. The enzyme catalyses L-glutamate 5-semialdehyde + phosphate + NADP(+) = L-glutamyl 5-phosphate + NADPH + H(+). The protein operates within amino-acid biosynthesis; L-proline biosynthesis; L-glutamate 5-semialdehyde from L-glutamate: step 2/2. Its function is as follows. Catalyzes the NADPH-dependent reduction of L-glutamate 5-phosphate into L-glutamate 5-semialdehyde and phosphate. The product spontaneously undergoes cyclization to form 1-pyrroline-5-carboxylate. In Marinobacter nauticus (strain ATCC 700491 / DSM 11845 / VT8) (Marinobacter aquaeolei), this protein is Gamma-glutamyl phosphate reductase.